Reading from the N-terminus, the 1234-residue chain is DNA-directed RNA polymerase subunit beta (1234 aa).

This sequence belongs to the RNA polymerase beta chain family. As to quaternary structure, the RNAP catalytic core consists of 2 alpha, 1 beta, 1 beta' and 1 omega subunit. When a sigma factor is associated with the core the holoenzyme is formed, which can initiate transcription.

It carries out the reaction RNA(n) + a ribonucleoside 5'-triphosphate = RNA(n+1) + diphosphate. In terms of biological role, DNA-dependent RNA polymerase catalyzes the transcription of DNA into RNA using the four ribonucleoside triphosphates as substrates. This chain is DNA-directed RNA polymerase subunit beta, found in Clostridium perfringens (strain ATCC 13124 / DSM 756 / JCM 1290 / NCIMB 6125 / NCTC 8237 / Type A).